The following is a 660-amino-acid chain: Secretin PulD (660 aa).

The first 27 residues, Met1 to Ala27, serve as a signal peptide directing secretion. The N0 stretch occupies residues Glu28 to Gly124. The interval Glu126–Gly190 is N1. An N2 region spans residues Asp191–Ala264. The tract at residues Gly267 to Asp341 is N3. The segment at Gln346–Asp596 is secretin. The interval Asp598 to Leu660 is s domain.

This sequence belongs to the bacterial secretin family. GSP D subfamily. In terms of assembly, forms a cylindrical channel with 15 subunits.

The protein resides in the cell outer membrane. In terms of biological role, involved in a type II secretion system (T2SS, formerly general secretion pathway, GSP) for the export of proteins. Required for the translocation of pullulanase. This subunit forms the outer membrane channel. This Klebsiella pneumoniae protein is Secretin PulD (pulD).